The primary structure comprises 273 residues: NH(3)-dependent NAD(+) synthetase (273 aa).

Residue 47 to 54 (GISGGQDS) coordinates ATP. Mg(2+) is bound at residue D53. Position 139 (R139) interacts with deamido-NAD(+). T159 is an ATP binding site. A Mg(2+)-binding site is contributed by E164. Residues K172 and D179 each contribute to the deamido-NAD(+) site. K188 and T210 together coordinate ATP. 259-260 (HK) is a binding site for deamido-NAD(+).

It belongs to the NAD synthetase family. Homodimer.

The catalysed reaction is deamido-NAD(+) + NH4(+) + ATP = AMP + diphosphate + NAD(+) + H(+). It participates in cofactor biosynthesis; NAD(+) biosynthesis; NAD(+) from deamido-NAD(+) (ammonia route): step 1/1. Its function is as follows. Catalyzes the ATP-dependent amidation of deamido-NAD to form NAD. Uses ammonia as a nitrogen source. This is NH(3)-dependent NAD(+) synthetase from Staphylococcus haemolyticus (strain JCSC1435).